Consider the following 503-residue polypeptide: Carboxyl-terminal PDZ ligand of neuronal nitric oxide synthase protein (503 aa).

Residues 26 to 191 form the PID domain; it reads FQHGISFEAK…ESERNSDGSG (166 aa). The tract at residues 170-212 is disordered; sequence HTQQNADGQEDGESERNSDGSGDPGRQLTGAERVSTAAAEETD. Ser183, Ser187, Ser190, and Ser262 each carry phosphoserine. The stretch at 318–359 forms a coiled coil; it reads AAEAAARLEAQARVHQLLLQNKDMLQHISLLVKQVQELELKL. Ser367, Ser370, Ser397, and Ser413 each carry phosphoserine. The interaction with NOS1 stretch occupies residues 491–503; that stretch reads QELGDSLDDEIAV. The PDZ-binding signature appears at 501-503; it reads IAV.

Interacts with the PDZ domain of NOS1 or the second PDZ domain of DLG4 through its C-terminus. Interacts with RASD1 and SYN1, SYN2 and SYN3 via its PID domain. Forms a ternary complex with NOS1 and SYN1. Forms a ternary complex with NOS1 and RASD1.

It localises to the cell projection. It is found in the filopodium. The protein localises to the podosome. Adapter protein involved in neuronal nitric-oxide (NO) synthesis regulation via its association with nNOS/NOS1. The complex formed with NOS1 and synapsins is necessary for specific NO and synapsin functions at a presynaptic level. Mediates an indirect interaction between NOS1 and RASD1 leading to enhance the ability of NOS1 to activate RASD1. Competes with DLG4 for interaction with NOS1, possibly affecting NOS1 activity by regulating the interaction between NOS1 and DLG4. In kidney podocytes, plays a role in podosomes and filopodia formation through CDC42 activation. This chain is Carboxyl-terminal PDZ ligand of neuronal nitric oxide synthase protein, found in Mus musculus (Mouse).